The following is a 404-amino-acid chain: Phosphopentomutase (404 aa).

The Mn(2+) site is built by Asp-10, Asp-303, His-308, Asp-344, His-345, and His-356.

The protein belongs to the phosphopentomutase family. Mn(2+) is required as a cofactor.

It localises to the cytoplasm. It catalyses the reaction 2-deoxy-alpha-D-ribose 1-phosphate = 2-deoxy-D-ribose 5-phosphate. The enzyme catalyses alpha-D-ribose 1-phosphate = D-ribose 5-phosphate. Its pathway is carbohydrate degradation; 2-deoxy-D-ribose 1-phosphate degradation; D-glyceraldehyde 3-phosphate and acetaldehyde from 2-deoxy-alpha-D-ribose 1-phosphate: step 1/2. Functionally, isomerase that catalyzes the conversion of deoxy-ribose 1-phosphate (dRib-1-P) and ribose 1-phosphate (Rib-1-P) to deoxy-ribose 5-phosphate (dRib-5-P) and ribose 5-phosphate (Rib-5-P), respectively. This Shewanella sp. (strain ANA-3) protein is Phosphopentomutase.